The chain runs to 261 residues: Cytochrome c oxidase subunit 3 (261 aa).

Over 1-15 the chain is Mitochondrial matrix; that stretch reads MTHQTHAYHMVNPSP. A helical membrane pass occupies residues 16-34; the sequence is WPLTGALSALLMTSGLTMW. Residues 35 to 40 are Mitochondrial intermembrane-facing; that stretch reads FHFNSM. The chain crosses the membrane as a helical span at residues 41 to 66; the sequence is TLLTLGLTTNMLTMYQWWRDIIREST. Over 67–72 the chain is Mitochondrial matrix; the sequence is FQGHHT. A helical membrane pass occupies residues 73–105; that stretch reads PNVQKGLRYGMILFIISEVLFFTGFFWAFYHSS. The Mitochondrial intermembrane segment spans residues 106–128; the sequence is LAPTPELGGCWPPTGIHPLNPLE. The chain crosses the membrane as a helical span at residues 129 to 152; that stretch reads VPLLNTSVLLASGVSITWAHHSLM. At 153 to 155 the chain is on the mitochondrial matrix side; the sequence is EGN. The chain crosses the membrane as a helical span at residues 156–183; sequence RNHMLQALFITISLGVYFTLLQASEYYE. Over 184-190 the chain is Mitochondrial intermembrane; sequence APFTISD. The helical transmembrane segment at 191–223 threads the bilayer; sequence GVYGSTFFVATGFHGLHVIIGSTFLIVCFFRQL. Over 224 to 232 the chain is Mitochondrial matrix; it reads KFHFTSNHH. A helical transmembrane segment spans residues 233–256; the sequence is FGFEAAAWYWHFVDVVWLFLYVSI. Over 257–261 the chain is Mitochondrial intermembrane; that stretch reads YWWGS.

This sequence belongs to the cytochrome c oxidase subunit 3 family. Component of the cytochrome c oxidase (complex IV, CIV), a multisubunit enzyme composed of 14 subunits. The complex is composed of a catalytic core of 3 subunits MT-CO1, MT-CO2 and MT-CO3, encoded in the mitochondrial DNA, and 11 supernumerary subunits COX4I, COX5A, COX5B, COX6A, COX6B, COX6C, COX7A, COX7B, COX7C, COX8 and NDUFA4, which are encoded in the nuclear genome. The complex exists as a monomer or a dimer and forms supercomplexes (SCs) in the inner mitochondrial membrane with NADH-ubiquinone oxidoreductase (complex I, CI) and ubiquinol-cytochrome c oxidoreductase (cytochrome b-c1 complex, complex III, CIII), resulting in different assemblies (supercomplex SCI(1)III(2)IV(1) and megacomplex MCI(2)III(2)IV(2)).

It localises to the mitochondrion inner membrane. The enzyme catalyses 4 Fe(II)-[cytochrome c] + O2 + 8 H(+)(in) = 4 Fe(III)-[cytochrome c] + 2 H2O + 4 H(+)(out). Component of the cytochrome c oxidase, the last enzyme in the mitochondrial electron transport chain which drives oxidative phosphorylation. The respiratory chain contains 3 multisubunit complexes succinate dehydrogenase (complex II, CII), ubiquinol-cytochrome c oxidoreductase (cytochrome b-c1 complex, complex III, CIII) and cytochrome c oxidase (complex IV, CIV), that cooperate to transfer electrons derived from NADH and succinate to molecular oxygen, creating an electrochemical gradient over the inner membrane that drives transmembrane transport and the ATP synthase. Cytochrome c oxidase is the component of the respiratory chain that catalyzes the reduction of oxygen to water. Electrons originating from reduced cytochrome c in the intermembrane space (IMS) are transferred via the dinuclear copper A center (CU(A)) of subunit 2 and heme A of subunit 1 to the active site in subunit 1, a binuclear center (BNC) formed by heme A3 and copper B (CU(B)). The BNC reduces molecular oxygen to 2 water molecules using 4 electrons from cytochrome c in the IMS and 4 protons from the mitochondrial matrix. The protein is Cytochrome c oxidase subunit 3 (MT-CO3) of Antidorcas marsupialis (Springbok).